The chain runs to 156 residues: ATP synthase subunit b (156 aa).

A helical transmembrane segment spans residues 7 to 27 (LFAQLVVFFILAWFTMKFVWP).

Belongs to the ATPase B chain family. As to quaternary structure, F-type ATPases have 2 components, F(1) - the catalytic core - and F(0) - the membrane proton channel. F(1) has five subunits: alpha(3), beta(3), gamma(1), delta(1), epsilon(1). F(0) has four main subunits: a(1), b(2) and c(10-14). The alpha and beta chains form an alternating ring which encloses part of the gamma chain. F(1) is attached to F(0) by a central stalk formed by the gamma and epsilon chains, while a peripheral stalk is formed by the delta and b chains.

Its subcellular location is the cell inner membrane. F(1)F(0) ATP synthase produces ATP from ADP in the presence of a proton or sodium gradient. F-type ATPases consist of two structural domains, F(1) containing the extramembraneous catalytic core and F(0) containing the membrane proton channel, linked together by a central stalk and a peripheral stalk. During catalysis, ATP synthesis in the catalytic domain of F(1) is coupled via a rotary mechanism of the central stalk subunits to proton translocation. Its function is as follows. Component of the F(0) channel, it forms part of the peripheral stalk, linking F(1) to F(0). This Methylibium petroleiphilum (strain ATCC BAA-1232 / LMG 22953 / PM1) protein is ATP synthase subunit b.